The following is a 235-amino-acid chain: Ribosomal RNA large subunit methyltransferase E (235 aa).

Positions 76, 78, 99, 115, and 139 each coordinate S-adenosyl-L-methionine. The active-site Proton acceptor is the Lys-179.

Belongs to the class I-like SAM-binding methyltransferase superfamily. RNA methyltransferase RlmE family.

It localises to the cytoplasm. It catalyses the reaction uridine(2552) in 23S rRNA + S-adenosyl-L-methionine = 2'-O-methyluridine(2552) in 23S rRNA + S-adenosyl-L-homocysteine + H(+). In terms of biological role, specifically methylates the uridine in position 2552 of 23S rRNA at the 2'-O position of the ribose in the fully assembled 50S ribosomal subunit. This Rhodopseudomonas palustris (strain BisA53) protein is Ribosomal RNA large subunit methyltransferase E.